The chain runs to 624 residues: Atypical kinase COQ8B, mitochondrial (624 aa).

The interval 90 to 117 (EMPPDFSSKDGRGETSETPVGAATGTIK) is disordered. A helical membrane pass occupies residues 189–205 (LANFGGLAVGLGIGAIA). The KxGQ motif motif lies at 249–252 (KIGQ). Residues 285–517 (MHKVLEEELG…ATVLKKSKDL (233 aa)) form the Protein kinase domain. Residues 310-313 (AAAS) carry the AAAS motif motif. Residues Ser-313, Lys-331, and 418–421 (MELV) each bind ATP. The active-site Proton acceptor is Asp-461. Residues Asn-466 and Asp-480 each contribute to the ATP site.

Belongs to the protein kinase superfamily. ADCK protein kinase family. In terms of assembly, homodimer; homodimerizes via its transmembrane region. Interacts with the multi-subunit COQ enzyme complex.

It localises to the mitochondrion membrane. Its subcellular location is the cytoplasm. The protein resides in the cytosol. It is found in the cell membrane. Its pathway is cofactor biosynthesis; ubiquinone biosynthesis. Its function is as follows. Atypical kinase involved in the biosynthesis of coenzyme Q, also named ubiquinone, an essential lipid-soluble electron transporter for aerobic cellular respiration. Its substrate specificity is still unclear: may act as a protein kinase that mediates phosphorylation of COQ3. According to other reports, acts as a small molecule kinase, possibly a lipid kinase that phosphorylates a prenyl lipid in the ubiquinone biosynthesis pathway, as suggested by its ability to bind coenzyme Q lipid intermediates. However, the small molecule kinase activity was not confirmed by another publication. Required for podocyte migration. In Danio rerio (Zebrafish), this protein is Atypical kinase COQ8B, mitochondrial.